We begin with the raw amino-acid sequence, 118 residues long: Large ribosomal subunit protein bL17 (118 aa).

It belongs to the bacterial ribosomal protein bL17 family. Part of the 50S ribosomal subunit. Contacts protein L32.

This Phytoplasma australiense protein is Large ribosomal subunit protein bL17.